A 187-amino-acid polypeptide reads, in one-letter code: Large ribosomal subunit protein bL32m (187 aa).

Residues Cys-109, Cys-112, Cys-122, and Cys-125 each coordinate Zn(2+).

Belongs to the bacterial ribosomal protein bL32 family. In terms of assembly, component of the mitochondrial ribosome large subunit (39S) which comprises a 16S rRNA and about 50 distinct proteins. MRPL32 precursor is processed by the m-AAA protease (composed of AFG3L2 and SPG7), which cleaves the N-terminal transit peptide. Cleavage by the m-AAA protease takes place prior to assembly into the large subunit, an essential step for mitochondrial ribosome (mitoribosome) assembly. Proper processing by the m-AAA protease is dependent on the zinc-binding region within the tightly folded C-terminal domain of MRPL32: zinc-dependent folding halts degradation initiated from the N-terminus and triggers the release of mature MRPL32.

The protein localises to the mitochondrion. Component of the mitochondrial large ribosomal subunit (mt-LSU). The mitochondrial ribosome (mitoribosome) is a large ribonucleoprotein complex responsible for the synthesis of proteins inside mitochondria. The protein is Large ribosomal subunit protein bL32m (Mrpl32) of Mus musculus (Mouse).